The chain runs to 91 residues: MSKVCQVTGRKPTRGYKYAIRGIAKKKKGIGLKVTGKTKRRFQPNLFKKRIWFAEENRFITLKLSTAALRTIDRLGVFAVVRKMRANGQSV.

This sequence belongs to the bacterial ribosomal protein bL28 family.

The chain is Large ribosomal subunit protein bL28 from Protochlamydia amoebophila (strain UWE25).